The following is a 301-amino-acid chain: Large ribosomal subunit protein uL18z (301 aa).

Belongs to the universal ribosomal protein uL18 family. As to quaternary structure, component of the large ribosomal subunit (LSU). Expressed in seedlings, roots, stems, leaves, inflorescences and siliques.

The protein localises to the cytoplasm. It localises to the nucleus. The protein resides in the nucleolus. Its subcellular location is the nucleoplasm. Component of the ribosome, a large ribonucleoprotein complex responsible for the synthesis of proteins in the cell. The small ribosomal subunit (SSU) binds messenger RNAs (mRNAs) and translates the encoded message by selecting cognate aminoacyl-transfer RNA (tRNA) molecules. The large subunit (LSU) contains the ribosomal catalytic site termed the peptidyl transferase center (PTC), which catalyzes the formation of peptide bonds, thereby polymerizing the amino acids delivered by tRNAs into a polypeptide chain. The nascent polypeptides leave the ribosome through a tunnel in the LSU and interact with protein factors that function in enzymatic processing, targeting, and the membrane insertion of nascent chains at the exit of the ribosomal tunnel. Seems involved in the regulation of cell proliferation. Essential in leaf polarity establishment, probably having a role for translation in leaf dorsoventral patterning to specify leaf adaxial identity. This is Large ribosomal subunit protein uL18z from Arabidopsis thaliana (Mouse-ear cress).